Consider the following 238-residue polypeptide: Probable transcriptional regulatory protein SAK_1658 (238 aa).

Belongs to the TACO1 family. YeeN subfamily.

It is found in the cytoplasm. The chain is Probable transcriptional regulatory protein SAK_1658 from Streptococcus agalactiae serotype Ia (strain ATCC 27591 / A909 / CDC SS700).